Reading from the N-terminus, the 272-residue chain is PILR alpha-associated neural protein (272 aa).

Positions 1–27 are cleaved as a signal peptide; it reads MWPAQLLSQLLPLWPLLLLPLSLPAQG. The disordered stretch occupies residues 25-93; the sequence is AQGSSHRSPP…PSGFEEGPPS (69 aa). Residues 28-174 lie on the Extracellular side of the membrane; it reads SSHRSPPAPA…FGGRGEGVDP (147 aa). Threonine 136 carries an O-linked (GalNAc...) threonine glycan. The chain crosses the membrane as a helical span at residues 175 to 195; the sequence is QLYVTITISIIIVLVATGIIF. At 196–272 the chain is on the cytoplasmic side; that stretch reads KFCWDRSQKR…KGAPAFQLNR (77 aa). A disordered region spans residues 205–272; sequence RRRPSGQQGA…KGAPAFQLNR (68 aa). Positions 209–225 are enriched in polar residues; sequence SGQQGALRQEESQQPLT.

Post-translationally, O-glycosylation at Thr-136 is essential for recognition by PILRA.

The protein resides in the membrane. Its function is as follows. Acts as a ligand for PILRA in neuronal tissues, where it may be involved in immune regulation. The polypeptide is PILR alpha-associated neural protein (Pianp) (Rattus norvegicus (Rat)).